The primary structure comprises 453 residues: MSPQTETKAGVGFKAGVKEYKLTYYTPEYETKDTDILAAFRVTPQPGVPPEERGAAVAAESSTGTWTTVWTDGLTSLDRYKGRCYHIEPVPGEEEQFIAYVAYPLDLFEEGSVTNMFTSIVGNVFGFKALRALRLEDLRIPVAYVKTFQGPPHGIQVERDKLNKYGRPLLGCTIKPKLGLSAKNYGRAVYECLRGGLDFTKDDENVNSQPFMRWRDRFLFCAEAIYKSQAETGEIKGHYLNATAGTCEEMIKRAVFARELGVPIVMHDYLTGGFTANTTLSHYCRDNGLLLHIHRAMHAVIDRQKNHGMHFRVLAKALRMSGGDHIHSGTVVGKLEGERDITLGFVDLLRDDYIEKDRSRGIYFTQDWVSLPGVLPVASRGIHVWHMPALTEIFGDDSVLQFGGGTLGHPWGNAPGAVANRVALEACVKARNEGRDLAVEGGEIIREACKWSP.

The propeptide occupies methionine 1–serine 2. The residue at position 3 (proline 3) is an N-acetylproline. Lysine 14 is subject to N6,N6,N6-trimethyllysine. Residues asparagine 123 and threonine 173 each coordinate substrate. The active-site Proton acceptor is lysine 175. Lysine 177 provides a ligand contact to substrate. Residues lysine 201, aspartate 203, and glutamate 204 each contribute to the Mg(2+) site. Position 201 is an N6-carboxylysine (lysine 201). Catalysis depends on histidine 294, which acts as the Proton acceptor. Residues arginine 295, histidine 327, and serine 379 each contribute to the substrate site.

It belongs to the RuBisCO large chain family. Type I subfamily. In terms of assembly, heterohexadecamer of 8 large chains and 8 small chains; disulfide-linked. The disulfide link is formed within the large subunit homodimers. Mg(2+) is required as a cofactor. Post-translationally, the disulfide bond which can form in the large chain dimeric partners within the hexadecamer appears to be associated with oxidative stress and protein turnover.

The protein resides in the plastid. Its subcellular location is the chloroplast. The catalysed reaction is 2 (2R)-3-phosphoglycerate + 2 H(+) = D-ribulose 1,5-bisphosphate + CO2 + H2O. It catalyses the reaction D-ribulose 1,5-bisphosphate + O2 = 2-phosphoglycolate + (2R)-3-phosphoglycerate + 2 H(+). In terms of biological role, ruBisCO catalyzes two reactions: the carboxylation of D-ribulose 1,5-bisphosphate, the primary event in carbon dioxide fixation, as well as the oxidative fragmentation of the pentose substrate in the photorespiration process. Both reactions occur simultaneously and in competition at the same active site. The polypeptide is Ribulose bisphosphate carboxylase large chain (Galium aparine (Catchweed bedstraw)).